A 179-amino-acid chain; its full sequence is Inner membrane-spanning protein YciB (179 aa).

5 helical membrane-spanning segments follow: residues 22–42 (IYAA…YSWV), 50–70 (MALI…FFHN), 76–96 (WKVT…QWVM), 121–141 (LAWA…AFWL), and 149–169 (FKVF…GIYI).

The protein belongs to the YciB family.

It localises to the cell inner membrane. Plays a role in cell envelope biogenesis, maintenance of cell envelope integrity and membrane homeostasis. This chain is Inner membrane-spanning protein YciB, found in Klebsiella pneumoniae (strain 342).